A 153-amino-acid chain; its full sequence is Ribosomal RNA large subunit methyltransferase H (153 aa).

S-adenosyl-L-methionine contacts are provided by residues leucine 63, glycine 102, and 121–126 (FGKITL).

Belongs to the RNA methyltransferase RlmH family. As to quaternary structure, homodimer.

It is found in the cytoplasm. The enzyme catalyses pseudouridine(1915) in 23S rRNA + S-adenosyl-L-methionine = N(3)-methylpseudouridine(1915) in 23S rRNA + S-adenosyl-L-homocysteine + H(+). Its function is as follows. Specifically methylates the pseudouridine at position 1915 (m3Psi1915) in 23S rRNA. This is Ribosomal RNA large subunit methyltransferase H from Sulfurovum sp. (strain NBC37-1).